The chain runs to 394 residues: S-adenosylmethionine synthase (394 aa).

His18 is a binding site for ATP. Asp20 contacts Mg(2+). Glu46 contributes to the K(+) binding site. L-methionine contacts are provided by Glu59 and Gln102. The segment at 102–112 (QSPDIDMGVSA) is flexible loop. ATP is bound by residues 175-177 (DGK), Asp250, 256-257 (RK), Ala273, and Lys277. Asp250 contributes to the L-methionine binding site. Position 281 (Lys281) interacts with L-methionine.

Belongs to the AdoMet synthase family. In terms of assembly, homotetramer; dimer of dimers. Mg(2+) serves as cofactor. It depends on K(+) as a cofactor.

It is found in the cytoplasm. It carries out the reaction L-methionine + ATP + H2O = S-adenosyl-L-methionine + phosphate + diphosphate. Its pathway is amino-acid biosynthesis; S-adenosyl-L-methionine biosynthesis; S-adenosyl-L-methionine from L-methionine: step 1/1. Functionally, catalyzes the formation of S-adenosylmethionine (AdoMet) from methionine and ATP. The overall synthetic reaction is composed of two sequential steps, AdoMet formation and the subsequent tripolyphosphate hydrolysis which occurs prior to release of AdoMet from the enzyme. The chain is S-adenosylmethionine synthase from Brachyspira hyodysenteriae (strain ATCC 49526 / WA1).